A 55-amino-acid chain; its full sequence is uncharacterized protein (55 aa).

An N-terminal signal peptide occupies residues 1 to 19 (MQILLVVRLVLLWLGGLSA).

This is an uncharacterized protein from Orgyia pseudotsugata multicapsid polyhedrosis virus (OpMNPV).